Consider the following 389-residue polypeptide: Tryptophan synthase beta chain (389 aa).

An N6-(pyridoxal phosphate)lysine modification is found at Lys84.

The protein belongs to the TrpB family. In terms of assembly, tetramer of two alpha and two beta chains. The cofactor is pyridoxal 5'-phosphate.

It catalyses the reaction (1S,2R)-1-C-(indol-3-yl)glycerol 3-phosphate + L-serine = D-glyceraldehyde 3-phosphate + L-tryptophan + H2O. It participates in amino-acid biosynthesis; L-tryptophan biosynthesis; L-tryptophan from chorismate: step 5/5. Functionally, the beta subunit is responsible for the synthesis of L-tryptophan from indole and L-serine. This is Tryptophan synthase beta chain from Clostridium novyi (strain NT).